The primary structure comprises 119 residues: Large ribosomal subunit protein uL18 (119 aa).

Belongs to the universal ribosomal protein uL18 family. As to quaternary structure, part of the 50S ribosomal subunit; part of the 5S rRNA/L5/L18/L25 subcomplex. Contacts the 5S and 23S rRNAs.

In terms of biological role, this is one of the proteins that bind and probably mediate the attachment of the 5S RNA into the large ribosomal subunit, where it forms part of the central protuberance. The protein is Large ribosomal subunit protein uL18 of Borrelia duttonii (strain Ly).